We begin with the raw amino-acid sequence, 629 residues long: Pentatricopeptide repeat-containing protein At1g62930, chloroplastic (629 aa).

The N-terminal 41 residues, 1 to 41 (MTSCVHLGIVASQSKKMSLAKRFAQLRKASPLFSLRGVYFS), are a transit peptide targeting the chloroplast. PPR repeat units follow at residues 79 to 113 (SIVE…RISY), 114 to 148 (DLYS…GYEP), 149 to 183 (DIVT…EYQP), 184 to 218 (NTVT…GCQP), 219 to 253 (DLFT…KIEA), 254 to 288 (DVVI…GIRP), 289 to 323 (NVVT…KINP), 324 to 358 (NVVT…SIDP), 359 to 393 (DIFT…DCFP), 394 to 428 (NVVT…GLVG), 429 to 463 (NTVT…GVPP), 464 to 498 (DIIT…KMEP), 499 to 533 (DIYT…GVKP), 534 to 568 (NVII…GTLP), and 569 to 603 (NSGT…GFVG).

It belongs to the PPR family. P subfamily.

The protein localises to the plastid. The protein resides in the chloroplast. The chain is Pentatricopeptide repeat-containing protein At1g62930, chloroplastic from Arabidopsis thaliana (Mouse-ear cress).